Here is a 217-residue protein sequence, read N- to C-terminus: Protein OPI10 homolog (217 aa).

Belongs to the OPI10 family.

The sequence is that of Protein OPI10 homolog from Dictyostelium discoideum (Social amoeba).